The following is a 2726-amino-acid chain: Filamin-C (2726 aa).

Residues 1-260 (MMNNSNYSDA…VMTYLSQFPK (260 aa)) form an actin-binding region. Ser-5 is modified (phosphoserine). Calponin-homology (CH) domains are found at residues 37-143 (KIQQ…LHYS) and 160-263 (QTPK…KAKL). 15 Filamin repeats span residues 271 to 369 (SKQL…EVNV), 371 to 469 (MALG…PVHV), 470 to 566 (AEAC…EVQV), 567 to 659 (SPEA…IAHI), 663 to 759 (PPDC…RVNV), 760 to 862 (GEGS…HIKV), 863 to 961 (DPSH…VVNV), 962 to 1057 (APPL…AVEG), 1058 to 1150 (VLPP…KATI), 1151 to 1245 (QPVF…RVHV), 1246 to 1345 (QPAV…RVGV), 1346 to 1438 (TEGC…RVPV), 1439 to 1534 (KDVV…KIKV), 1535 to 1631 (LPSH…RIHA), and 1636 to 1735 (DASK…HVLA). At Arg-1003 the chain carries Omega-N-methylarginine. A phosphoserine mark is found at Ser-1162 and Ser-1339. Residues 1736–1759 (CDPLPHVEEPAEMLQMRQPYAPLR) are hinge 1. Filamin repeat units lie at residues 1760-1855 (PGTC…QFYV), 1856-1947 (DAIN…TAKI), 1948-2034 (TGDD…KILV), and 2037-2129 (SEIG…TVKV). Position 2043 is a phosphoserine (Ser-2043). The segment at 2163–2244 (GNWFQMVSAQ…FGSITRQQEG (82 aa)) is intradomain insert; mediate targeting to Z lines. Basic and acidic residues predominate over residues 2193–2210 (EISKTRGGETKREVRVEE). The disordered stretch occupies residues 2193 to 2214 (EISKTRGGETKREVRVEESTQV). One copy of the Filamin 20; mediates interaction with XIRP1 repeat lies at 2212 to 2307 (TQVGGDPFPA…VPGSPFQFTV (96 aa)). 2 positions are modified to phosphoserine: Ser-2234 and Ser-2237. Residue Thr-2239 is modified to Phosphothreonine. The span at 2241–2260 (QQEGEASSQDMTAQVTSPSG) shows a compositional bias: polar residues. The disordered stretch occupies residues 2241–2261 (QQEGEASSQDMTAQVTSPSGK). Filamin repeat units lie at residues 2310 to 2402 (LGEG…VVPV), 2404 to 2497 (SLSD…KIRV), and 2501 to 2593 (SQAG…KAKV). The segment at 2404 to 2725 (SLSDDARRLT…VPGSPFKVNV (322 aa)) is interaction with INPPL1. Phosphoserine is present on residues Ser-2587, Ser-2618, Ser-2621, Ser-2633, Ser-2715, and Ser-2719. The segment at 2594 to 2630 (TGPRLSGGHSLHETSTVLVETVTKSSSSRGASYSSIP) is hinge 2. Positions 2594–2726 (TGPRLSGGHS…PGSPFKVNVP (133 aa)) are self-association site, tail. A Filamin 24 repeat occupies 2631-2725 (KFSSDASKVV…VPGSPFKVNV (95 aa)).

It belongs to the filamin family. As to quaternary structure, homodimer; the filamin repeat 24 and the second hinge domain are important for dimer formation. Interacts with FLNB, INPPL1, ITGB1A, KCND2, MYOT, MYOZ1 and MYOZ3. Interacts with sarcoglycans SGCD and SGCG. Interacts (via filament repeats 17-18, 20-21 and 24) with USP25 (isoform USP25m only). Interacts with FBLIM1. Interacts with XIRP1; this interaction is mediated by filamin 20 repeat. Interacts with KY. Interacts with IGFN1. Interacts with MICALL2. Interacts with ANK3. Interacts with MICALL2. Interacts with ANK3. Interacts with SYNPO2. Post-translationally, ubiquitinated by FBXL22, leading to proteasomal degradation.

It localises to the cytoplasm. Its subcellular location is the membrane. It is found in the cytoskeleton. The protein resides in the myofibril. The protein localises to the sarcomere. It localises to the z line. Functionally, muscle-specific filamin, which plays a central role in sarcomere assembly and organization. Critical for normal myogenesis, it probably functions as a large actin-cross-linking protein with structural functions at the Z lines in muscle cells. May be involved in reorganizing the actin cytoskeleton in response to signaling events. The chain is Filamin-C (Flnc) from Mus musculus (Mouse).